The following is a 141-amino-acid chain: ATP synthase epsilon chain 1 (141 aa).

Belongs to the ATPase epsilon chain family. F-type ATPases have 2 components, CF(1) - the catalytic core - and CF(0) - the membrane proton channel. CF(1) has five subunits: alpha(3), beta(3), gamma(1), delta(1), epsilon(1). CF(0) has three main subunits: a, b and c.

The protein resides in the cell inner membrane. Its function is as follows. Produces ATP from ADP in the presence of a proton gradient across the membrane. The sequence is that of ATP synthase epsilon chain 1 from Thiobacillus denitrificans (strain ATCC 25259 / T1).